A 383-amino-acid chain; its full sequence is Anhydro-N-acetylmuramic acid kinase (383 aa).

9 to 16 (GTSLDGID) provides a ligand contact to ATP.

Belongs to the anhydro-N-acetylmuramic acid kinase family.

The catalysed reaction is 1,6-anhydro-N-acetyl-beta-muramate + ATP + H2O = N-acetyl-D-muramate 6-phosphate + ADP + H(+). Its pathway is amino-sugar metabolism; 1,6-anhydro-N-acetylmuramate degradation. The protein operates within cell wall biogenesis; peptidoglycan recycling. Functionally, catalyzes the specific phosphorylation of 1,6-anhydro-N-acetylmuramic acid (anhMurNAc) with the simultaneous cleavage of the 1,6-anhydro ring, generating MurNAc-6-P. Is required for the utilization of anhMurNAc either imported from the medium or derived from its own cell wall murein, and thus plays a role in cell wall recycling. In Bacillus cereus (strain ATCC 10987 / NRS 248), this protein is Anhydro-N-acetylmuramic acid kinase.